The following is a 90-amino-acid chain: DNA-directed RNA polymerase subunit omega (90 aa).

The protein belongs to the RNA polymerase subunit omega family. The RNAP catalytic core consists of 2 alpha, 1 beta, 1 beta' and 1 omega subunit. When a sigma factor is associated with the core the holoenzyme is formed, which can initiate transcription.

It carries out the reaction RNA(n) + a ribonucleoside 5'-triphosphate = RNA(n+1) + diphosphate. Its function is as follows. Promotes RNA polymerase assembly. Latches the N- and C-terminal regions of the beta' subunit thereby facilitating its interaction with the beta and alpha subunits. The polypeptide is DNA-directed RNA polymerase subunit omega (Rhodopirellula baltica (strain DSM 10527 / NCIMB 13988 / SH1)).